The sequence spans 535 residues: NEDD8-activating enzyme E1 regulatory subunit (535 aa).

Residues 332 to 345 (DMIADSSKFIKLQN) are interaction with UBA3.

This sequence belongs to the ubiquitin-activating E1 family. ULA1 subfamily. As to quaternary structure, heterodimer of UBA3 and NAE1. The complex binds NEDD8 and UBE2M.

It participates in protein modification; protein neddylation. Its function is as follows. Regulatory subunit of the dimeric UBA3-NAE1 E1 enzyme. E1 activates NEDD8 by first adenylating its C-terminal glycine residue with ATP, thereafter linking this residue to the side chain of the catalytic cysteine, yielding a NEDD8-UBA3 thioester and free AMP. E1 finally transfers NEDD8 to the catalytic cysteine of UBE2M. The covalent attachment of NEDD8 to target proteins is known as 'neddylation' and the process is involved in the regulation of cell growth, viability and development. The sequence is that of NEDD8-activating enzyme E1 regulatory subunit (NAE1) from Gallus gallus (Chicken).